Reading from the N-terminus, the 108-residue chain is Large ribosomal subunit protein uL24 (108 aa).

This sequence belongs to the universal ribosomal protein uL24 family. In terms of assembly, part of the 50S ribosomal subunit.

Functionally, one of two assembly initiator proteins, it binds directly to the 5'-end of the 23S rRNA, where it nucleates assembly of the 50S subunit. In terms of biological role, one of the proteins that surrounds the polypeptide exit tunnel on the outside of the subunit. This chain is Large ribosomal subunit protein uL24, found in Mycoplasmopsis pulmonis (strain UAB CTIP) (Mycoplasma pulmonis).